The following is a 338-amino-acid chain: Probable family 20 transposase (338 aa).

The protein belongs to the transposase 20 family.

Required for the transposition of an insertion element. This is Probable family 20 transposase from Pseudomonas aeruginosa (strain ATCC 15692 / DSM 22644 / CIP 104116 / JCM 14847 / LMG 12228 / 1C / PRS 101 / PAO1).